Consider the following 190-residue polypeptide: Peptidyl-tRNA hydrolase (190 aa).

Tyr-14 contacts tRNA. The active-site Proton acceptor is His-19. 3 residues coordinate tRNA: Tyr-64, Asn-66, and Asn-112.

Belongs to the PTH family. As to quaternary structure, monomer.

It is found in the cytoplasm. The catalysed reaction is an N-acyl-L-alpha-aminoacyl-tRNA + H2O = an N-acyl-L-amino acid + a tRNA + H(+). Hydrolyzes ribosome-free peptidyl-tRNAs (with 1 or more amino acids incorporated), which drop off the ribosome during protein synthesis, or as a result of ribosome stalling. In terms of biological role, catalyzes the release of premature peptidyl moieties from peptidyl-tRNA molecules trapped in stalled 50S ribosomal subunits, and thus maintains levels of free tRNAs and 50S ribosomes. The protein is Peptidyl-tRNA hydrolase of Pelodictyon phaeoclathratiforme (strain DSM 5477 / BU-1).